Consider the following 318-residue polypeptide: Biotin synthase (318 aa).

The region spanning 44–273 (LCGNKFDLCT…TVQIRLAGGR (230 aa)) is the Radical SAM core domain. The [4Fe-4S] cluster site is built by Cys62, Cys66, and Cys69. Residues Ser106, Cys138, Cys198, and Arg268 each coordinate [2Fe-2S] cluster.

Belongs to the radical SAM superfamily. Biotin synthase family. Homodimer. It depends on [4Fe-4S] cluster as a cofactor. The cofactor is [2Fe-2S] cluster.

The enzyme catalyses (4R,5S)-dethiobiotin + (sulfur carrier)-SH + 2 reduced [2Fe-2S]-[ferredoxin] + 2 S-adenosyl-L-methionine = (sulfur carrier)-H + biotin + 2 5'-deoxyadenosine + 2 L-methionine + 2 oxidized [2Fe-2S]-[ferredoxin]. The protein operates within cofactor biosynthesis; biotin biosynthesis; biotin from 7,8-diaminononanoate: step 2/2. Its function is as follows. Catalyzes the conversion of dethiobiotin (DTB) to biotin by the insertion of a sulfur atom into dethiobiotin via a radical-based mechanism. The chain is Biotin synthase from Clostridium botulinum (strain Loch Maree / Type A3).